The primary structure comprises 480 residues: Glutarate-semialdehyde dehydrogenase (480 aa).

Residues 156-157 (WN), 180-183 (KPAS), and 233-234 (GS) each bind NADP(+). The Proton acceptor role is filled by glutamate 255. NADP(+) is bound at residue leucine 256. Cysteine 289 serves as the catalytic Nucleophile. NADP(+) is bound at residue glutamate 384.

It belongs to the aldehyde dehydrogenase family.

It catalyses the reaction 5-oxopentanoate + NADP(+) + H2O = glutarate + NADPH + 2 H(+). It participates in amino-acid degradation. Functionally, catalyzes the conversion of 5-oxopentanoate (glutarate semialdehyde) to glutarate. Involved in L-lysine degradation. The sequence is that of Glutarate-semialdehyde dehydrogenase from Pseudomonas putida (strain ATCC 47054 / DSM 6125 / CFBP 8728 / NCIMB 11950 / KT2440).